Consider the following 641-residue polypeptide: Chaperone protein DnaK (641 aa).

Threonine 198 bears the Phosphothreonine; by autocatalysis mark. Basic and acidic residues-rich tracts occupy residues alanine 514–glutamate 529, serine 540–glutamate 554, and alanine 608–aspartate 621. Disordered stretches follow at residues alanine 514–glutamate 554 and glutamine 604–alanine 641. A compositionally biased stretch (acidic residues) spans aspartate 622–aspartate 633.

Belongs to the heat shock protein 70 family.

Acts as a chaperone. In Sinorhizobium medicae (strain WSM419) (Ensifer medicae), this protein is Chaperone protein DnaK.